A 456-amino-acid polypeptide reads, in one-letter code: Cell cycle checkpoint control protein Rad9 (456 aa).

Residues 300–302 (KRK) carry the Nuclear localization signal motif.

It belongs to the rad9 family. Component of the 9-1-1 checkpoint clamp complex consisting of Rad9 isoform A, Rad1 and Hus1-like; the interaction with Hus1-like is direct. Does not interact directly with Rad1; this interaction is probably mediated by Hus1-like. This complex probably also forms with Rad9 isoform B, however 9-1-1 complex containing Rad9 isoform A localizes to the nuclear periphery. Interacts with Brca2. As to expression, expressed in ovary.

It is found in the nucleus envelope. The protein localises to the nucleus. Functionally, component of the Rad9-Rad1-Hus1 (9-1-1) checkpoint clamp complex. Its function is as follows. Targets the 9-1-1 complex to the nuclear periphery. Targeting to the nuclear periphery is disrupted in the presence of persistent double stranded break DNA damage, possibly as a function of the meiotic checkpoint. The polypeptide is Cell cycle checkpoint control protein Rad9 (Drosophila melanogaster (Fruit fly)).